We begin with the raw amino-acid sequence, 387 residues long: TSC22 domain family protein 4 (387 aa).

Disordered regions lie at residues Met-1–Tyr-85 and Ile-135–Gly-232. Residues Ser-28–Asp-51 show a composition bias toward pro residues. Thr-57 is subject to Phosphothreonine. Phosphoserine occurs at positions 62 and 165. Thr-183 carries the phosphothreonine modification. A phosphoserine mark is found at Ser-187 and Ser-189. Position 223 is a phosphothreonine (Thr-223). Residues Ser-254, Ser-258, and Ser-271 each carry the phosphoserine modification. The segment at Leu-336 to Leu-357 is leucine-zipper. Position 362 is a phosphoserine (Ser-362). The interval Gln-368–Ile-387 is disordered.

The protein belongs to the TSC-22/Dip/Bun family. Forms a homodimer or heterodimer. Forms a heterodimer with TSC22D1 isoforms 1 and 2. Interacts with NRBP1.

It localises to the nucleus. The protein localises to the cytoplasm. Its subcellular location is the cell projection. It is found in the dendrite. The protein resides in the synapse. In terms of biological role, binds DNA and acts as a transcriptional repressor. Involved in the regulation of systematic glucose homeostasis and insulin sensitivity, via transcriptional repression of downstream insulin signaling targets such as OBP2A/LCN13. Acts as a negative regulator of lipogenic gene expression in hepatocytes and thereby mediates the control of very low-density lipoprotein release. May play a role in neurite elongation and survival. The chain is TSC22 domain family protein 4 from Rattus norvegicus (Rat).